A 331-amino-acid chain; its full sequence is tRNA-modifying protein YgfZ (331 aa).

Trp-28 and Trp-191 together coordinate folate.

Belongs to the tRNA-modifying YgfZ family.

It is found in the cytoplasm. Folate-binding protein involved in regulating the level of ATP-DnaA and in the modification of some tRNAs. It is probably a key factor in regulatory networks that act via tRNA modification, such as initiation of chromosomal replication. The polypeptide is tRNA-modifying protein YgfZ (Edwardsiella ictaluri (strain 93-146)).